A 365-amino-acid chain; its full sequence is MSAASKSIDVMLKPLLVGGRPISNRFVMAPLTRCRADDNHVPTAAMVKHYSDRASMGLIITEATQIQKGYSTFAHEGGIYDKEHVDGWRKVTDAVHDKGGIIFCQIHNGGRSTVPSNVDEGVRIVAPSAVAITGHKCAGSFARNGKTQPYPVPHAMAAEEIASYVNLYAAAARNAIAAGFDGVEVHGANGYLIDQFLKTSSNQRTDEYGGSIENRCRFLFEVLDAVIQAIGRERVGLRISPLNSFNDQSDEDPQALTRYICSQLNLRTIAFLDVMRGDFFSPARGADKWAREEYEGVLFTGMSFEIEEAAKAVESGAADAVVFGTKALANPDLVARAVAGAPLNKPDPATFYTTGEAGYNDYPFM.

FMN is bound by residues 30–32 (PLT), Ala-63, and Gln-105. Tyr-191 serves as the catalytic Proton donor. FMN is bound by residues Arg-238, Ser-303, and 324–325 (GT).

This sequence belongs to the NADH:flavin oxidoreductase/NADH oxidase family. Monomer. FMN is required as a cofactor.

The protein localises to the cytoplasm. It is found in the cytosol. In terms of biological role, may function as a flavin mononucleotide (FMN)-dependent alkene reductase on substrates carrying alpha,beta-unsaturated carbonyl groups (ketones, aldehydes, carboxylic acids, esters, lactones or cyclic imides). The catalysis depends on NAD(P)H, which acts as a hydride donor for the reduction. Seems to be involved in metabolic pathways required for efficient replication of amastigotes within macrophages. Acts as a FMN-dependent nitroreductase that activates anti-leishmanial bicyclic nitroaromatic prodrugs including delamanid, DNDI-VL-2098 and (R)-PA-824, forming toxic products that kill the parasites. This Leishmania infantum protein is Probable flavin mononucleotide-dependent alkene reductase.